A 280-amino-acid chain; its full sequence is 4-diphosphocytidyl-2-C-methyl-D-erythritol kinase (280 aa).

K11 is a catalytic residue. Position 95-105 (95-105 (PVAAGLGGGSS)) interacts with ATP. Residue D137 is part of the active site.

Belongs to the GHMP kinase family. IspE subfamily.

The catalysed reaction is 4-CDP-2-C-methyl-D-erythritol + ATP = 4-CDP-2-C-methyl-D-erythritol 2-phosphate + ADP + H(+). It functions in the pathway isoprenoid biosynthesis; isopentenyl diphosphate biosynthesis via DXP pathway; isopentenyl diphosphate from 1-deoxy-D-xylulose 5-phosphate: step 3/6. In terms of biological role, catalyzes the phosphorylation of the position 2 hydroxy group of 4-diphosphocytidyl-2C-methyl-D-erythritol. In Pelobacter propionicus (strain DSM 2379 / NBRC 103807 / OttBd1), this protein is 4-diphosphocytidyl-2-C-methyl-D-erythritol kinase.